Consider the following 368-residue polypeptide: MSNAPILLTPGPLTTSTRTRQAMLVDWGSWDRDFNQLTASVCEQLLAIIDGSASHHCVPLQGSGTFAVEAAIGTLVPRDGKVLVLINGAYGQRLAKICKVLGRTFSTFETAEDQPTTAEDVDRLLAADPAVTHVALIHCETSTGILNPLPEIAQVIQRHGKRLIIDAMSSFGALPIDAREVPFEALIAASGKCLEGVPGMGFVFAEKTALAAAEGNAHSLAMDLQDQHAYMAKTGQWRFTPPTHVVAALHEALLQYNEEGGLPARHQRYQDNCQTLLDGMAKIGLHSFLPAEIQAPIIVTFHAPKDPRYQFKDFYERVKAKGFILYPGKLTQVETFRVGCIGVVGAAGMQAAVDAVAEVLREMEVLDI.

The residue at position 192 (K192) is an N6-(pyridoxal phosphate)lysine.

The protein belongs to the class-V pyridoxal-phosphate-dependent aminotransferase family. PhnW subfamily. Homodimer. Requires pyridoxal 5'-phosphate as cofactor.

The catalysed reaction is (2-aminoethyl)phosphonate + pyruvate = phosphonoacetaldehyde + L-alanine. Involved in phosphonate degradation. In Pseudomonas entomophila (strain L48), this protein is 2-aminoethylphosphonate--pyruvate transaminase.